Consider the following 259-residue polypeptide: MPVVSMKQLLEAGVHFGHQTRRWNPKMKPFIFTERNGIYIIDLQKTVKMIDTAYNYVKDVAADGGVVLFVGTKKQAQDSIEEEATRAGQYYVNHRWLGGTLTNWKTIQSRISRLKELKKMAEDGTFDRLPKKEVAVLTKQREKLERFLGGIEDMPRIPDVLYIVDPHKEQIAVKEAQKLHIPIVAMVDTNTDPDDIDVIIPSNDDAIRAVRLITAKMADAVIEGKQGEDDQQVAPAEDVAEEVSDESLQDLKNSVEGND.

The segment at 224–259 is disordered; the sequence is GKQGEDDQQVAPAEDVAEEVSDESLQDLKNSVEGND. A compositionally biased stretch (acidic residues) spans 238–248; sequence DVAEEVSDESL. Polar residues predominate over residues 250 to 259; that stretch reads DLKNSVEGND.

It belongs to the universal ribosomal protein uS2 family.

The sequence is that of Small ribosomal subunit protein uS2 from Limosilactobacillus fermentum (strain NBRC 3956 / LMG 18251) (Lactobacillus fermentum).